Consider the following 660-residue polypeptide: Probable beta-hexosaminidase fdl (660 aa).

The N-terminal stretch at 1 to 36 (MSLAVSLRRALLVLLTGAIFILTVLYWNQGVTKAQA) is a signal peptide. Residues Asn210, Asn412, and Asn452 are each glycosylated (N-linked (GlcNAc...) asparagine).

This sequence belongs to the glycosyl hydrolase 20 family. In third instar larval and early pupal brains, expressed in cells sending projections across the interhemispheric junction. In adult brain, expressed in mushroom body, ellipsoid body and pars intercerebralis.

The catalysed reaction is Hydrolysis of terminal non-reducing N-acetyl-D-hexosamine residues in N-acetyl-beta-D-hexosaminides.. Its function is as follows. Involved in brain restructurization via hormonal control during metamorphosis. Implicated in N-glycan processing. In Drosophila melanogaster (Fruit fly), this protein is Probable beta-hexosaminidase fdl (fdl).